Here is a 367-residue protein sequence, read N- to C-terminus: MSDFGHTGFSIDDLPLRDDLRGQAPYGAPQLTVKAVLNTNENPYPPSPELVEAIGRAAAEAAVGLNRYPDREATALRQALADYLGHGVDAANVWAANGSNEILQQILQAFGGPGHKALGFEPSYSMHPIIARGTATEWVSVPRTADFDVDADAAVAAVKEHEPSVVFLTSPNNPTGTALPLATVEAIAAAAPGVVVVDEAYAEFRREGTPSALSLLRTYPNVIVSRTMSKAFAMAGVRLGYLAAHPAVVDALQLVRLPYHLSTVTQAVALTALRYADELLSAVATLRAERDALVDWLRAHGFEVADSDANFVLFGRFPDRSAVFQHLLDQGVLIREVGPPEWLRVTVGTPEEMAIFREALLTATGRA.

Position 230 is an N6-(pyridoxal phosphate)lysine (Lys230).

This sequence belongs to the class-II pyridoxal-phosphate-dependent aminotransferase family. Histidinol-phosphate aminotransferase subfamily. In terms of assembly, homodimer. Requires pyridoxal 5'-phosphate as cofactor.

The enzyme catalyses L-histidinol phosphate + 2-oxoglutarate = 3-(imidazol-4-yl)-2-oxopropyl phosphate + L-glutamate. It participates in amino-acid biosynthesis; L-histidine biosynthesis; L-histidine from 5-phospho-alpha-D-ribose 1-diphosphate: step 7/9. The protein is Histidinol-phosphate aminotransferase of Thermobifida fusca (strain YX).